A 532-amino-acid polypeptide reads, in one-letter code: Phosphoribosylamine--glycine ligase, chloroplastic (532 aa).

A chloroplast-targeting transit peptide spans 1 to 75 (MSSLCASNCY…IQRRLFLLRC (75 aa)). The ATP-grasp domain occupies 204 to 412 (KNLCHKYNIP…LAKVLLAACK (209 aa)).

Belongs to the GARS family.

Its subcellular location is the plastid. The protein resides in the chloroplast. It catalyses the reaction 5-phospho-beta-D-ribosylamine + glycine + ATP = N(1)-(5-phospho-beta-D-ribosyl)glycinamide + ADP + phosphate + H(+). The protein operates within purine metabolism; IMP biosynthesis via de novo pathway; N(1)-(5-phospho-D-ribosyl)glycinamide from 5-phospho-alpha-D-ribose 1-diphosphate: step 2/2. The polypeptide is Phosphoribosylamine--glycine ligase, chloroplastic (PUR2) (Arabidopsis thaliana (Mouse-ear cress)).